Reading from the N-terminus, the 234-residue chain is Ribonuclease HII (234 aa).

The RNase H type-2 domain occupies 30–221 (GPVAGVDEAG…VRNAAMGSSL (192 aa)). A divalent metal cation-binding residues include Asp-36, Glu-37, and Asp-130.

This sequence belongs to the RNase HII family. Requires Mn(2+) as cofactor. Mg(2+) is required as a cofactor.

The protein resides in the cytoplasm. It carries out the reaction Endonucleolytic cleavage to 5'-phosphomonoester.. Functionally, endonuclease that specifically degrades the RNA of RNA-DNA hybrids. This Mycobacteroides abscessus (strain ATCC 19977 / DSM 44196 / CCUG 20993 / CIP 104536 / JCM 13569 / NCTC 13031 / TMC 1543 / L948) (Mycobacterium abscessus) protein is Ribonuclease HII.